Here is a 313-residue protein sequence, read N- to C-terminus: tRNA pseudouridine synthase B (313 aa).

His44 is a binding site for substrate. Asp49 acts as the Nucleophile in catalysis. The substrate site is built by Tyr77, Tyr180, and Leu201.

This sequence belongs to the pseudouridine synthase TruB family. Type 1 subfamily.

The enzyme catalyses uridine(55) in tRNA = pseudouridine(55) in tRNA. Responsible for synthesis of pseudouridine from uracil-55 in the psi GC loop of transfer RNAs. This is tRNA pseudouridine synthase B from Hamiltonella defensa subsp. Acyrthosiphon pisum (strain 5AT).